The chain runs to 452 residues: tRNA modification GTPase MnmE (452 aa).

(6S)-5-formyl-5,6,7,8-tetrahydrofolate is bound by residues arginine 23, glutamate 80, and lysine 119. The 160-residue stretch at 215–374 folds into the TrmE-type G domain; the sequence is GIWIALVGQP…LQQGLLEMIG (160 aa). Residue asparagine 225 coordinates K(+). GTP contacts are provided by residues 225-230, 244-250, and 269-272; these read NVGKSS, TEVPGTT, and DTAG. Residue serine 229 coordinates Mg(2+). 3 residues coordinate K(+): threonine 244, valine 246, and threonine 249. Mg(2+) is bound at residue threonine 250. Residue lysine 452 participates in (6S)-5-formyl-5,6,7,8-tetrahydrofolate binding.

It belongs to the TRAFAC class TrmE-Era-EngA-EngB-Septin-like GTPase superfamily. TrmE GTPase family. As to quaternary structure, homodimer. Heterotetramer of two MnmE and two MnmG subunits. K(+) is required as a cofactor.

Its subcellular location is the cytoplasm. Functionally, exhibits a very high intrinsic GTPase hydrolysis rate. Involved in the addition of a carboxymethylaminomethyl (cmnm) group at the wobble position (U34) of certain tRNAs, forming tRNA-cmnm(5)s(2)U34. The sequence is that of tRNA modification GTPase MnmE from Nitrosospira multiformis (strain ATCC 25196 / NCIMB 11849 / C 71).